The chain runs to 285 residues: Lipoyl synthase (285 aa).

[4Fe-4S] cluster contacts are provided by C36, C41, C47, C62, C66, C69, and S275. Positions F48–K264 constitute a Radical SAM core domain.

This sequence belongs to the radical SAM superfamily. Lipoyl synthase family. The cofactor is [4Fe-4S] cluster.

The protein localises to the cytoplasm. It catalyses the reaction [[Fe-S] cluster scaffold protein carrying a second [4Fe-4S](2+) cluster] + N(6)-octanoyl-L-lysyl-[protein] + 2 oxidized [2Fe-2S]-[ferredoxin] + 2 S-adenosyl-L-methionine + 4 H(+) = [[Fe-S] cluster scaffold protein] + N(6)-[(R)-dihydrolipoyl]-L-lysyl-[protein] + 4 Fe(3+) + 2 hydrogen sulfide + 2 5'-deoxyadenosine + 2 L-methionine + 2 reduced [2Fe-2S]-[ferredoxin]. It participates in protein modification; protein lipoylation via endogenous pathway; protein N(6)-(lipoyl)lysine from octanoyl-[acyl-carrier-protein]: step 2/2. In terms of biological role, catalyzes the radical-mediated insertion of two sulfur atoms into the C-6 and C-8 positions of the octanoyl moiety bound to the lipoyl domains of lipoate-dependent enzymes, thereby converting the octanoylated domains into lipoylated derivatives. In Caldicellulosiruptor saccharolyticus (strain ATCC 43494 / DSM 8903 / Tp8T 6331), this protein is Lipoyl synthase.